A 316-amino-acid chain; its full sequence is Cyclin-dependent kinase inhibitor 1C (316 aa).

The residue at position 107 (arginine 107) is an Omega-N-methylarginine. The segment at 124 to 153 is disordered; it reads ESLDGLEEAPEQLPSVPVPAPASTPPPVPV. The span at 139–153 shows a compositional bias: pro residues; that stretch reads VPVPAPASTPPPVPV. Tandem repeats lie at residues 156–159, 160–163, 180–183, 184–187, 188–191, 198–201, 202–205, 206–209, and 210–213. The tract at residues 156 to 213 is 9 X 4 AA repeats of P-A-P-A; that stretch reads PAPAPAPAPVAAPVAAPVAVAVLAPAPAPAPAPAPAPAPVAAPAPAPAPAPAPAPAPA. A compositionally biased stretch (pro residues) spans 181–217; the sequence is APAPAPAPAPAPAPVAAPAPAPAPAPAPAPAPAPAPD. The segment at 181-260 is disordered; the sequence is APAPAPAPAP…AAGTAAASAN (80 aa). Polar residues predominate over residues 223-233; it reads SAEQGANQGQR. Low complexity predominate over residues 251 to 260; it reads AAGTAAASAN. Serine 268 carries the phosphoserine modification. The Nuclear localization signal signature appears at 278–281; that stretch reads KRKR. The tract at residues 278 to 316 is disordered; sequence KRKRSAPEKSSGDVPAPCPSPSAAPGVGSVEQTPRKRLR.

Belongs to the CDI family. In terms of assembly, interacts with PCNA. As to expression, expressed in the heart, brain, lung, skeletal muscle, kidney, pancreas and testis. Expressed in the eye. High levels are seen in the placenta while low levels are seen in the liver.

It is found in the nucleus. Functionally, potent tight-binding inhibitor of several G1 cyclin/CDK complexes (cyclin E-CDK2, cyclin D2-CDK4, and cyclin A-CDK2) and, to lesser extent, of the mitotic cyclin B-CDC2. Negative regulator of cell proliferation. May play a role in maintenance of the non-proliferative state throughout life. This chain is Cyclin-dependent kinase inhibitor 1C (CDKN1C), found in Homo sapiens (Human).